Here is a 336-residue protein sequence, read N- to C-terminus: Protein-arginine N-acetylglucosaminyltransferase SseK1 (336 aa).

Residue Arg24 is glycosylated (N-beta-linked (GlcNAc) arginine; by autocatalysis). UDP-N-acetyl-alpha-D-glucosamine is bound by residues 50 to 52 and Tyr74; that span reads QWF. N-beta-linked (GlcNAc) arginine; by autocatalysis glycosylation occurs at Arg152. The DXD motif signature appears at 223–225; the sequence is DAD. 224-225 is a binding site for UDP-N-acetyl-alpha-D-glucosamine; sequence AD. Asp225 serves as a coordination point for Mn(2+). Glu255 serves as the catalytic Proton acceptor. The Mn(2+) site is built by Asn322 and Ser324. UDP-N-acetyl-alpha-D-glucosamine contacts are provided by Ser324 and Ser329. The N-beta-linked (GlcNAc) arginine; by autocatalysis glycan is linked to Arg333.

The protein belongs to the glycosyltransferase NleB family. The cofactor is Mn(2+). Auto-glycosylated: arginine GlcNAcylation is required for activity toward death domain-containing host target proteins.

Its subcellular location is the secreted. The protein localises to the host cytoplasm. The protein resides in the host cytosol. The catalysed reaction is L-arginyl-[protein] + UDP-N-acetyl-alpha-D-glucosamine = N(omega)-(N-acetyl-beta-D-glucosaminyl)-L-arginyl-[protein] + UDP + H(+). Protein-arginine N-acetylglucosaminyltransferase activity is inhibited by 100066N compound (flavone analog) and 102644N compound (a substituted isoxazole). Protein-arginine N-acetylglucosaminyltransferase effector that disrupts TNF signaling in infected cells, including NF-kappa-B signaling, apoptosis and necroptosis. Acts by catalyzing the transfer of a single N-acetylglucosamine (GlcNAc) to a conserved arginine residue in the death domain of host proteins TRADD and, to a lower extent, FADD: arginine GlcNAcylation prevents homotypic/heterotypic death domain interactions and assembly of the oligomeric TNF-alpha receptor complex, thereby disrupting TNF signaling. Also acts on host proteins without a death domain: catalyzes arginine GlcNAcylation of host GAPDH protein, thereby preventing GAPDH interaction with TRAF2, leading to inhibit NF-kappa-B signaling. Catalyzes GlcNAcylation of host tubulin-folding cofactor TBCB, thereby promoting microtubule stability. Also mediates auto-GlcNAcylation, which is required for activity toward death domain-containing host target proteins. In Salmonella enteritidis (strain 2009K0958), this protein is Protein-arginine N-acetylglucosaminyltransferase SseK1.